The primary structure comprises 258 residues: Regulatory protein RecX (258 aa).

It belongs to the RecX family.

It localises to the cytoplasm. Functionally, modulates RecA activity. The polypeptide is Regulatory protein RecX (Streptococcus pyogenes serotype M5 (strain Manfredo)).